Reading from the N-terminus, the 123-residue chain is Small ribosomal subunit protein uS13 (123 aa).

The tract at residues 92 to 123 (RKGLPVRGQKTKTNARTRKGPKKLVGAKKKSK) is disordered.

It belongs to the universal ribosomal protein uS13 family. In terms of assembly, part of the 30S ribosomal subunit. Forms a loose heterodimer with protein S19. Forms two bridges to the 50S subunit in the 70S ribosome.

Its function is as follows. Located at the top of the head of the 30S subunit, it contacts several helices of the 16S rRNA. In the 70S ribosome it contacts the 23S rRNA (bridge B1a) and protein L5 of the 50S subunit (bridge B1b), connecting the 2 subunits; these bridges are implicated in subunit movement. Contacts the tRNAs in the A and P-sites. This is Small ribosomal subunit protein uS13 from Clostridium kluyveri (strain NBRC 12016).